Reading from the N-terminus, the 545-residue chain is Chaperonin GroEL (545 aa).

Residues 30–33 (TLGP), K51, 87–91 (DGTTT), G415, and D495 contribute to the ATP site.

This sequence belongs to the chaperonin (HSP60) family. Forms a cylinder of 14 subunits composed of two heptameric rings stacked back-to-back. Interacts with the co-chaperonin GroES.

It is found in the cytoplasm. It catalyses the reaction ATP + H2O + a folded polypeptide = ADP + phosphate + an unfolded polypeptide.. In terms of biological role, together with its co-chaperonin GroES, plays an essential role in assisting protein folding. The GroEL-GroES system forms a nano-cage that allows encapsulation of the non-native substrate proteins and provides a physical environment optimized to promote and accelerate protein folding. This is Chaperonin GroEL from Shewanella putrefaciens (strain CN-32 / ATCC BAA-453).